We begin with the raw amino-acid sequence, 732 residues long: Acylamino-acid-releasing enzyme (732 aa).

An N-acetylmethionine modification is found at Met-1. Phosphoserine is present on residues Ser-185 and Ser-187. Catalysis depends on charge relay system residues Ser-587, Asp-675, and His-707.

It belongs to the peptidase S9C family. In terms of assembly, homotetramer.

Its subcellular location is the cytoplasm. The enzyme catalyses Cleavage of an N-acetyl or N-formyl amino acid from the N-terminus of a polypeptide.. Its activity is regulated as follows. Homotetramerization is required for activity. Tetramerization results in the formation of a gated channel which is involved in substrate selection and substrate access to the catalytic sites. This enzyme catalyzes the hydrolysis of the N-terminal peptide bond of an N-acetylated peptide to generate an N-acetylated amino acid and a peptide with a free N-terminus. It preferentially cleaves off Ac-Ala, Ac-Met and Ac-Ser. Also, involved in the degradation of oxidized and glycated proteins. The protein is Acylamino-acid-releasing enzyme (Apeh) of Mus musculus (Mouse).